The following is a 287-amino-acid chain: Eukaryotic translation initiation factor 3 subunit F (287 aa).

The MPN domain occupies 12–142; it reads VRVHPVVLFQ…IKAYVCVSLG (131 aa).

It belongs to the eIF-3 subunit F family. As to quaternary structure, component of the eukaryotic translation initiation factor 3 (eIF-3) complex.

The protein resides in the cytoplasm. Its function is as follows. Component of the eukaryotic translation initiation factor 3 (eIF-3) complex, which is involved in protein synthesis of a specialized repertoire of mRNAs and, together with other initiation factors, stimulates binding of mRNA and methionyl-tRNAi to the 40S ribosome. The eIF-3 complex specifically targets and initiates translation of a subset of mRNAs involved in cell proliferation. The chain is Eukaryotic translation initiation factor 3 subunit F from Culex quinquefasciatus (Southern house mosquito).